Reading from the N-terminus, the 215-residue chain is MNVSIEQKYQALLNIVPFVSHETMNDLIQFESLILQWNAHINLISAATIPVLWIRHILDSAQIYPLHSNFLHWCDLGSGGGFPAIVIAIFLKTKKAGHIDLVESNGKKIAFLRTVISQLNLPATVHHCRIEDVYQKIKKPDVITARGLACLDELLQLIFPLLTQKTIALLQKGRDYAIEITNASANWQFDLLKHKSKIDKNSVILEISHVRSCRG.

S-adenosyl-L-methionine-binding positions include Gly77, Phe82, 130-131, and Arg146; that span reads IE.

This sequence belongs to the methyltransferase superfamily. RNA methyltransferase RsmG family.

It localises to the cytoplasm. The enzyme catalyses guanosine(527) in 16S rRNA + S-adenosyl-L-methionine = N(7)-methylguanosine(527) in 16S rRNA + S-adenosyl-L-homocysteine. Specifically methylates the N7 position of guanine in position 527 of 16S rRNA. This Bartonella quintana (strain Toulouse) (Rochalimaea quintana) protein is Ribosomal RNA small subunit methyltransferase G.